Reading from the N-terminus, the 251-residue chain is Ribonuclease HII (251 aa).

The RNase H type-2 domain occupies 32–223 (GPVAGVDEAG…VRERLGLRPL (192 aa)). The a divalent metal cation site is built by D38, E39, and D132.

It belongs to the RNase HII family. Mn(2+) serves as cofactor. The cofactor is Mg(2+).

It is found in the cytoplasm. It catalyses the reaction Endonucleolytic cleavage to 5'-phosphomonoester.. Endonuclease that specifically degrades the RNA of RNA-DNA hybrids. The polypeptide is Ribonuclease HII (Nocardia farcinica (strain IFM 10152)).